The primary structure comprises 61 residues: Small ribosomal subunit protein uS14 (61 aa).

Zn(2+)-binding residues include Cys-24, Cys-27, Cys-40, and Cys-43.

Belongs to the universal ribosomal protein uS14 family. Zinc-binding uS14 subfamily. In terms of assembly, part of the 30S ribosomal subunit. Contacts proteins S3 and S10. It depends on Zn(2+) as a cofactor.

Its function is as follows. Binds 16S rRNA, required for the assembly of 30S particles and may also be responsible for determining the conformation of the 16S rRNA at the A site. The protein is Small ribosomal subunit protein uS14 of Nitratidesulfovibrio vulgaris (strain DSM 19637 / Miyazaki F) (Desulfovibrio vulgaris).